The following is a 344-amino-acid chain: Protein RecA (344 aa).

66 to 73 is an ATP binding site; the sequence is GPESSGKT.

The protein belongs to the RecA family.

It is found in the cytoplasm. In terms of biological role, can catalyze the hydrolysis of ATP in the presence of single-stranded DNA, the ATP-dependent uptake of single-stranded DNA by duplex DNA, and the ATP-dependent hybridization of homologous single-stranded DNAs. It interacts with LexA causing its activation and leading to its autocatalytic cleavage. This Methylobacillus flagellatus protein is Protein RecA.